The chain runs to 66 residues: Small ribosomal subunit protein eS27 (66 aa).

Positions 21, 24, 40, and 43 each coordinate Zn(2+). A C4-type zinc finger spans residues 21-43 (CRQCNNEQVIFSNATFPVRCLSC).

It belongs to the eukaryotic ribosomal protein eS27 family. Part of the 30S ribosomal subunit. It depends on Zn(2+) as a cofactor.

The chain is Small ribosomal subunit protein eS27 from Sulfolobus acidocaldarius (strain ATCC 33909 / DSM 639 / JCM 8929 / NBRC 15157 / NCIMB 11770).